Consider the following 187-residue polypeptide: Resolvase OPG149 (187 aa).

The protein belongs to the RuvC family. Poxviruses-type subfamily. The cofactor is Mg(2+).

Functionally, plays a role in DNA replication by cleaving viral DNA concatamers to yield unit-length viral genomes. The concatamer junctions contain inverted repeat sequences that can be extruded as cruciforms, yielding Holliday junctions that A22 protein cleaves. This Variola virus (isolate Human/India/Ind3/1967) (VARV) protein is Resolvase OPG149 (OPG149).